The sequence spans 609 residues: Proteasome-associated ATPase (609 aa).

The segment at 1–24 is disordered; sequence MGESERSEAFGIPRDSPLSSGDAA. The stretch at 20-96 forms a coiled coil; sequence SGDAAELEQL…LREEVDRLGQ (77 aa). 296-301 lines the ATP pocket; that stretch reads GCGKTL. Residues 608-609 are docks into pockets in the proteasome alpha-ring; that stretch reads YL.

This sequence belongs to the AAA ATPase family. Homohexamer. Assembles into a hexameric ring structure that caps the 20S proteasome core. Strongly interacts with the prokaryotic ubiquitin-like protein Pup through a hydrophobic interface; the interacting region of ARC lies in its N-terminal coiled-coil domain. There is one Pup binding site per ARC hexamer ring. Upon ATP-binding, the C-terminus of ARC interacts with the alpha-rings of the proteasome core, possibly by binding to the intersubunit pockets.

It functions in the pathway protein degradation; proteasomal Pup-dependent pathway. In terms of biological role, ATPase which is responsible for recognizing, binding, unfolding and translocation of pupylated proteins into the bacterial 20S proteasome core particle. May be essential for opening the gate of the 20S proteasome via an interaction with its C-terminus, thereby allowing substrate entry and access to the site of proteolysis. Thus, the C-termini of the proteasomal ATPase may function like a 'key in a lock' to induce gate opening and therefore regulate proteolysis. The protein is Proteasome-associated ATPase of Mycobacterium bovis (strain BCG / Pasteur 1173P2).